The following is a 535-amino-acid chain: Dimethylaniline monooxygenase [N-oxide-forming] 2 (535 aa).

FAD is bound by residues 9–13 (GAGVS), Glu32, 40–41 (LW), and 61–62 (NT). NADP(+) is bound by residues 60-61 (TN) and 195-198 (SAAD). Residue Lys492 forms a Glycyl lysine isopeptide (Lys-Gly) (interchain with G-Cter in SUMO) linkage. The helical transmembrane segment at 510–530 (APVSFLIKVLGLLAIVLAFFF) threads the bilayer.

Belongs to the FMO family. The cofactor is FAD. It depends on Mg(2+) as a cofactor.

The protein localises to the microsome membrane. Its subcellular location is the endoplasmic reticulum membrane. Functionally, catalyzes the oxidative metabolism of numerous xenobiotics, including mainly therapeutic drugs and insecticides that contain a soft nucleophile, most commonly nitrogen and sulfur and participates to their bioactivation. The sequence is that of Dimethylaniline monooxygenase [N-oxide-forming] 2 from Rattus norvegicus (Rat).